The primary structure comprises 292 residues: Formamidopyrimidine-DNA glycosylase (292 aa).

Pro2 acts as the Schiff-base intermediate with DNA in catalysis. The Proton donor role is filled by Glu3. Catalysis depends on Lys61, which acts as the Proton donor; for beta-elimination activity. Residues His103, Arg122, and Lys168 each coordinate DNA. The FPG-type zinc finger occupies 254 to 288 (DAYGREGEHCRRCGAVMRREKFMNRSSFYCPRCQP). The Proton donor; for delta-elimination activity role is filled by Arg278.

It belongs to the FPG family. Monomer. Zn(2+) is required as a cofactor.

It carries out the reaction Hydrolysis of DNA containing ring-opened 7-methylguanine residues, releasing 2,6-diamino-4-hydroxy-5-(N-methyl)formamidopyrimidine.. The enzyme catalyses 2'-deoxyribonucleotide-(2'-deoxyribose 5'-phosphate)-2'-deoxyribonucleotide-DNA = a 3'-end 2'-deoxyribonucleotide-(2,3-dehydro-2,3-deoxyribose 5'-phosphate)-DNA + a 5'-end 5'-phospho-2'-deoxyribonucleoside-DNA + H(+). Involved in base excision repair of DNA damaged by oxidation or by mutagenic agents. Acts as a DNA glycosylase that recognizes and removes damaged bases. Has a preference for oxidized purines, such as 7,8-dihydro-8-oxoguanine (8-oxoG). Has AP (apurinic/apyrimidinic) lyase activity and introduces nicks in the DNA strand. Cleaves the DNA backbone by beta-delta elimination to generate a single-strand break at the site of the removed base with both 3'- and 5'-phosphates. In Mycobacterium ulcerans (strain Agy99), this protein is Formamidopyrimidine-DNA glycosylase.